The primary structure comprises 89 residues: Small ribosomal subunit protein uS15 (89 aa).

Residues 1–10 are compositionally biased toward basic and acidic residues; it reads MSITAERKAE. The tract at residues 1-24 is disordered; it reads MSITAERKAEVIQGNANKAGDTGS.

The protein belongs to the universal ribosomal protein uS15 family. As to quaternary structure, part of the 30S ribosomal subunit. Forms a bridge to the 50S subunit in the 70S ribosome, contacting the 23S rRNA.

Functionally, one of the primary rRNA binding proteins, it binds directly to 16S rRNA where it helps nucleate assembly of the platform of the 30S subunit by binding and bridging several RNA helices of the 16S rRNA. Its function is as follows. Forms an intersubunit bridge (bridge B4) with the 23S rRNA of the 50S subunit in the ribosome. This Rhodopseudomonas palustris (strain BisB5) protein is Small ribosomal subunit protein uS15.